Here is a 248-residue protein sequence, read N- to C-terminus: Pulmonary surfactant-associated protein A (248 aa).

The N-terminal stretch at 1–20 (MLLCSLTLTLILLAVSGTKC) is a signal peptide. The 70-residue stretch at 31–100 (GVPGIPGSPG…PGERGPPGPP (70 aa)) folds into the Collagen-like domain. Residues 34–105 (GIPGSPGLPG…PPGPPAYPDE (72 aa)) form a disordered region. Pro residues predominate over residues 54–65 (PGPPGPIGPPGG). Basic and acidic residues predominate over residues 84-93 (ERGDKGEPGE). In terms of domain architecture, C-type lectin spans 134 to 247 (VGEKVFSTNG…CLQYRLAICE (114 aa)). 2 disulfides stabilise this stretch: C155/C246 and C224/C238. An N-linked (GlcNAc...) asparagine glycan is attached at N207. Ca(2+)-binding residues include E215, R217, N234, and D235.

It belongs to the SFTPA family. As to quaternary structure, oligomeric complex of 6 set of homotrimers.

Its subcellular location is the secreted. The protein localises to the extracellular space. It is found in the extracellular matrix. It localises to the surface film. Functionally, in presence of calcium ions, it binds to surfactant phospholipids and contributes to lower the surface tension at the air-liquid interface in the alveoli of the mammalian lung and is essential for normal respiration. Enhances the expression of MYO18A/SP-R210 on alveolar macrophages. The protein is Pulmonary surfactant-associated protein A (SFTPA1) of Equus caballus (Horse).